An 841-amino-acid chain; its full sequence is Probable outer membrane usher protein EcpC (841 aa).

The N-terminal stretch at M1 to A29 is a signal peptide.

Belongs to the EcpC/MatD family.

Functionally, part of the ecpRABCDE operon, which encodes the E.coli common pilus (ECP). ECP is found in both commensal and pathogenic strains and plays a dual role in early-stage biofilm development and host cell recognition. The protein is Probable outer membrane usher protein EcpC (ecpC) of Escherichia coli O157:H7.